A 489-amino-acid polypeptide reads, in one-letter code: Cytochrome P450 monooxygenase AMT3 (489 aa).

The helical transmembrane segment at 292–312 (LFMVAGTETTITALSGLVFLL) threads the bilayer. Heme is bound at residue Cys436.

It belongs to the cytochrome P450 family. It depends on heme as a cofactor.

The protein localises to the membrane. Its pathway is mycotoxin biosynthesis. Its function is as follows. Cytochrome P450 monooxygenase; part of the gene clusters that mediate the biosynthesis of AM-toxins, host-selective toxins (HSTs) causing Alternaria blotch on apple, a worldwide distributed disease. AM-toxins are cyclic depsipeptides containing the 3 residues 2-hydroxy-isovaleric acid (2-HIV), dehydroalanine, L-alanine which are common for all 3 AM-toxins I to III. The fourth precursor is L-alpha-amino-methoxyphenyl-valeric acid (L-Amv) for AM-toxin I, L-alpha-amino-phenyl-valeric acid (L-Apv) for AM-toxin II, and L-alpha-amino-hydroxyphenyl-valeric acid (L-Ahv) for AM-toxin III. AM-toxins have two target sites for affecting susceptible apple cells; they cause invagination of the plasma membrane and electrolyte loss and chloroplast disorganization. The non-ribosomal peptide synthetase AMT1 contains 4 catalytic modules and is responsible for activation of each residue in AM-toxin. The aldo-keto reductase AMT2 catalyzes the conversion of 2-keto-isovaleric acid (2-KIV) to 2-hydroxy-isovaleric acid (2-HIV), one of the precursor residues incorporated by AMT1 during AM-toxin biosynthesis, by reduction of its ketone to an alcohol. The cytochrome P450 monooxygenase AMT3 and the thioesterase AMT4 are also important for AM-toxin production, but their exact function within the AM-toxin biosynthesis are not known yet. Up to 21 proteins (including AMT1 to AMT4) are predicted to be involved in AM-toxin biosynthesis since their expression ishighly up-regulated in AM-toxin-producing cultures. This Alternaria alternata (Alternaria rot fungus) protein is Cytochrome P450 monooxygenase AMT3.